The primary structure comprises 706 residues: Signal transducer and activator of transcription 1 (706 aa).

The 98-residue stretch at 477 to 574 (WCIGFISKND…EEMLRFFESE (98 aa)) folds into the SH2 domain.

The protein belongs to the transcription factor STAT family. Forms a homodimer or a heterodimer with a related family member. Expressed in adult and larval pharynx, head ganglia, tail ganglia, ventral nerve cord and body muscles.

It localises to the cytoplasm. The protein localises to the nucleus. Its function is as follows. Carries out a dual function: signal transduction and activation of transcription. Activated STAT proteins play a role in repression of dauer formation. Neuronal expression is held in check by negative signals through the TGF-beta pathway that target the daf-3 transcription factor. In Caenorhabditis elegans, this protein is Signal transducer and activator of transcription 1.